We begin with the raw amino-acid sequence, 926 residues long: Thyroid peroxidase (926 aa).

The signal sequence occupies residues 1–14 (MGARAVLGVTLAVA). Residues 19–844 (FFASILRRKD…TCVDAGRLPR (826 aa)) are Extracellular-facing. N-linked (GlcNAc...) asparagine glycosylation occurs at asparagine 129. Cysteine 142 and cysteine 158 are oxidised to a cystine. Aspartate 238 lines the heme b pocket. Histidine 239 serves as the catalytic Proton acceptor. Aspartate 240 contacts Ca(2+). Disulfide bonds link cysteine 259–cysteine 269 and cysteine 263–cysteine 286. N-linked (GlcNAc...) asparagine glycans are attached at residues asparagine 277 and asparagine 307. Threonine 321, phenylalanine 323, aspartate 325, and serine 327 together coordinate Ca(2+). N-linked (GlcNAc...) asparagine glycosylation occurs at asparagine 342. The heme b site is built by glutamate 398 and histidine 493. Intrachain disulfides connect cysteine 596–cysteine 653, cysteine 694–cysteine 719, cysteine 740–cysteine 780, cysteine 766–cysteine 792, cysteine 798–cysteine 812, cysteine 806–cysteine 821, and cysteine 823–cysteine 836. The Sushi domain maps to 738–793 (DACGFPDPVEDGGFLLCEERGQRVLVFSCRHGFRLRGPAQITCTPRGWDSPPPLCK). Residues 794–837 (DINECEDETDPPCHASARCKNTKGGVLCECSDPLVLGEDGRTCV) enclose the EGF-like; calcium-binding domain. Residues 845–869 (ASVVSIALGAVLVCGLAGLAWTVVC) form a helical membrane-spanning segment. Residues 870-926 (RWTHADARPLLPVGEGEGDGKSPSLPLPGCGNRRDVGAAPALEVEQDLSCGSRGLCE) lie on the Cytoplasmic side of the membrane.

The protein belongs to the peroxidase family. XPO subfamily. Interacts with DUOX1, DUOX2 and CYBA. Requires Ca(2+) as cofactor. The cofactor is heme b. Post-translationally, heme is covalently bound through a H(2)O(2)-dependent autocatalytic process. Heme insertion is important for the delivery of protein at the cell surface. Cleaved in its N-terminal part. In terms of processing, N-glycosylated; contains mannose and N-acetylglucosamine.

The protein localises to the membrane. It catalyses the reaction 2 iodide + H2O2 + 2 H(+) = diiodine + 2 H2O. It carries out the reaction [thyroglobulin]-L-tyrosine + iodide + H2O2 + H(+) = [thyroglobulin]-3-iodo-L-tyrosine + 2 H2O. The catalysed reaction is [thyroglobulin]-3-iodo-L-tyrosine + iodide + H2O2 + H(+) = [thyroglobulin]-3,5-diiodo-L-tyrosine + 2 H2O. The enzyme catalyses 2 [thyroglobulin]-3,5-diiodo-L-tyrosine + H2O2 = [thyroglobulin]-L-thyroxine + [thyroglobulin]-dehydroalanine + 2 H2O. It catalyses the reaction [thyroglobulin]-3-iodo-L-tyrosine + [thyroglobulin]-3,5-diiodo-L-tyrosine + H2O2 = [thyroglobulin]-3,3',5-triiodo-L-thyronine + [thyroglobulin]-dehydroalanine + 2 H2O. It participates in hormone biosynthesis; thyroid hormone biosynthesis. In terms of biological role, iodination and coupling of the hormonogenic tyrosines in thyroglobulin to yield the thyroid hormones T(3) and T(4). In Sus scrofa (Pig), this protein is Thyroid peroxidase (TPO).